We begin with the raw amino-acid sequence, 179 residues long: Large ribosomal subunit protein uL5 (179 aa).

Belongs to the universal ribosomal protein uL5 family. In terms of assembly, part of the 50S ribosomal subunit; part of the 5S rRNA/L5/L18/L25 subcomplex. Contacts the 5S rRNA and the P site tRNA. Forms a bridge to the 30S subunit in the 70S ribosome.

This is one of the proteins that bind and probably mediate the attachment of the 5S RNA into the large ribosomal subunit, where it forms part of the central protuberance. In the 70S ribosome it contacts protein S13 of the 30S subunit (bridge B1b), connecting the 2 subunits; this bridge is implicated in subunit movement. Contacts the P site tRNA; the 5S rRNA and some of its associated proteins might help stabilize positioning of ribosome-bound tRNAs. This Albidiferax ferrireducens (strain ATCC BAA-621 / DSM 15236 / T118) (Rhodoferax ferrireducens) protein is Large ribosomal subunit protein uL5.